Consider the following 236-residue polypeptide: uncharacterized protein (236 aa).

This is an uncharacterized protein from Ureaplasma parvum serovar 3 (strain ATCC 700970).